The following is a 279-amino-acid chain: Large ribosomal subunit protein uL2 (279 aa).

Disordered stretches follow at residues 31–61 (KSLLEPLTKSGGRNSAGRKTSRHRGGGHKRH) and 222–279 (GMAM…RNAK). Residues 49–61 (KTSRHRGGGHKRH) are compositionally biased toward basic residues. The span at 232 to 242 (MGGGEGKSKSG) shows a compositional bias: gly residues. Residues 259–268 (LKTRNRKKAS) are compositionally biased toward basic residues.

It belongs to the universal ribosomal protein uL2 family. In terms of assembly, part of the 50S ribosomal subunit. Forms a bridge to the 30S subunit in the 70S ribosome.

In terms of biological role, one of the primary rRNA binding proteins. Required for association of the 30S and 50S subunits to form the 70S ribosome, for tRNA binding and peptide bond formation. It has been suggested to have peptidyltransferase activity; this is somewhat controversial. Makes several contacts with the 16S rRNA in the 70S ribosome. This is Large ribosomal subunit protein uL2 from Chlorobium chlorochromatii (strain CaD3).